Reading from the N-terminus, the 920-residue chain is Protein translocase subunit SecA (920 aa).

Residues Gln85, 103–107 (GEGKT), and Asp514 each bind ATP. 4 residues coordinate Zn(2+): Cys904, Cys906, Cys915, and His916.

The protein belongs to the SecA family. Monomer and homodimer. Part of the essential Sec protein translocation apparatus which comprises SecA, SecYEG and auxiliary proteins SecDF-YajC and YidC. Zn(2+) serves as cofactor.

The protein localises to the cell inner membrane. The protein resides in the cytoplasm. The catalysed reaction is ATP + H2O + cellular proteinSide 1 = ADP + phosphate + cellular proteinSide 2.. Functionally, part of the Sec protein translocase complex. Interacts with the SecYEG preprotein conducting channel. Has a central role in coupling the hydrolysis of ATP to the transfer of proteins into and across the cell membrane, serving both as a receptor for the preprotein-SecB complex and as an ATP-driven molecular motor driving the stepwise translocation of polypeptide chains across the membrane. The protein is Protein translocase subunit SecA of Janthinobacterium sp. (strain Marseille) (Minibacterium massiliensis).